Consider the following 2089-residue polypeptide: Rho GTPase-activating protein 32 (2089 aa).

A disordered region spans residues 24–52; that stretch reads TQLTDGDEEEREESFRKMKSSIHSEEDDF. The PX; atypical domain maps to 131–245; the sequence is GSIQLSLSEE…LTWMEIDNKG (115 aa). Positions 259–321 constitute an SH3 domain; sequence PAVGAAHVIK…PGHCVELINQ (63 aa). One can recognise a Rho-GAP domain in the interval 372–567; that stretch reads CDLGEHLLNS…FILNHVDVLF (196 aa). Phosphoserine occurs at positions 706, 709, 732, and 738. A compositionally biased stretch (basic and acidic residues) spans 828-837; it reads KLSPSKKDAE. The tract at residues 828–858 is disordered; sequence KLSPSKKDAEAGGSQSQTPGSTASSEPVSPV. The span at 840 to 854 shows a compositional bias: polar residues; the sequence is GSQSQTPGSTASSEP. 4 positions are modified to phosphoserine: Ser852, Ser856, Ser892, and Ser952. 3 disordered regions span residues 955–1037, 1119–1141, and 1154–1197; these read QLQL…PPPP, CNQP…TDSG, and LHRN…SVST. 2 stretches are compositionally biased toward polar residues: residues 998 to 1014 and 1132 to 1141; these read LSSQ…QTGA and PTQSNTTDSG. Basic and acidic residues predominate over residues 1175–1191; it reads DSEKSDDHGSFPEDHAG. A Phosphoserine modification is found at Ser1206. The disordered stretch occupies residues 1221-1368; sequence GTSVDKPHHS…GDPAPIFLSD (148 aa). Over residues 1225–1235 the composition is skewed to basic and acidic residues; the sequence is DKPHHSSELTD. Positions 1262-1275 are enriched in low complexity; sequence TATMAYMMATPARA. The interaction with GAB2 stretch occupies residues 1395–1714; it reads RAPPLHLRAE…YNYAGLPPRP (320 aa). Asymmetric dimethylarginine is present on residues Arg1526 and Arg1536. Phosphoserine is present on Ser1588. Residues 1688-2089 are interaction with FYN; the sequence is SSRDFAFYNP…PHPDTQIHAE (402 aa). Disordered stretches follow at residues 1801 to 1865 and 1881 to 2002; these read PGKT…QSSL and RAHQ…LERD. The span at 1826-1841 shows a compositional bias: basic and acidic residues; the sequence is GDERFYRKHPESEFDR. A compositionally biased stretch (polar residues) spans 1850–1865; it reads STQAEKPSLPQKQSSL. Residues 1881–1892 are compositionally biased toward basic and acidic residues; it reads RAHQEASHRQLC. Residues 1918–1939 are compositionally biased toward polar residues; sequence SEPSNYHNSGKYMTSGQGSLTL. 2 stretches are compositionally biased toward basic and acidic residues: residues 1940–1954 and 1961–1975; these read NHKE…DRPR and PEKH…EEHF. An Omega-N-methylarginine modification is found at Arg2039.

The protein belongs to the PX domain-containing GAP family. Interacts with NTRK1 (via cytoplasmic domain); the interaction is independent of the phosphorylation state of NTRK1. Interacts with SHC3 (via SH2 domain). Interacts with RASA1 (via SH3 domain); the interaction is necessary for the Ras activation and cell transforming activities of ARHGAP32. Interacts with GAB1 and GAB2. Interacts with CRK and CRKL. Found in a complex with CRKL and BCAR1; upon EGF stimulation BCAR1 may be replaced by EGFR. Interacts with NCK1 (via SH3 domain); NCK1 recruits phosphorylated BCAR1 to the complex. Isoform 2 interacts with FYN; the interaction appears to be dependent on tyrosine phosphorylation of ARHGAP32. Interacts with EGFR; the interaction requires EGF stimulation and is increased by SHC3. Interacts with CDC42; the interaction requires constitutively active CDC42. Interacts with CTNNB1, DLG4, CDH2 and GRIN2B. Interacts with GPHN. Isoform 2 is phosphorylated on multiple tyrosine residues by FYN. Phosphorylated tyrosine residues undergo dephosphorylation after stimulation of NMDA receptors. Phosphorylated in vitro by CaMK2 in the presence of calmodulin and calcium; which inhibits GAP activity. As to expression, isoform 1 and isoform 2 are highly expressed in brain, specially in cortex, corpus striatum, hippocampus and thalamus. Low levels in cerebellum, colon, small intestine, and kidney.

The protein resides in the postsynaptic density. It is found in the cell projection. Its subcellular location is the dendritic spine. It localises to the cytoplasm. The protein localises to the cell cortex. The protein resides in the endosome membrane. It is found in the golgi apparatus membrane. Its subcellular location is the endoplasmic reticulum membrane. It localises to the membrane. In terms of biological role, GTPase-activating protein (GAP) promoting GTP hydrolysis on RHOA, CDC42 and RAC1 small GTPases. May be involved in the differentiation of neuronal cells during the formation of neurite extensions. Involved in NMDA receptor activity-dependent actin reorganization in dendritic spines. May mediate cross-talks between Ras- and Rho-regulated signaling pathways in cell growth regulation. Isoform 2 has higher GAP activity. The polypeptide is Rho GTPase-activating protein 32 (Arhgap32) (Mus musculus (Mouse)).